A 477-amino-acid polypeptide reads, in one-letter code: C3a anaphylatoxin chemotactic receptor (477 aa).

The Extracellular segment spans residues 1 to 23 (MESFDADTNSTDLHSRPLFQPQD). N9 carries N-linked (GlcNAc...) asparagine glycosylation. A helical transmembrane segment spans residues 24 to 46 (IASMVILGLTCLLGLLGNGLVLW). The Cytoplasmic segment spans residues 47 to 57 (VAGVKMKTTVN). A helical membrane pass occupies residues 58–80 (TVWFLHLTLADFLCCLSLPFSLA). Residues 81-96 (HLILQGHWPYGLFLCK) are Extracellular-facing. An intrachain disulfide couples C95 to C172. Residues 97 to 118 (LIPSIIILNMFASVFLLTAISL) traverse the membrane as a helical segment. The Cytoplasmic portion of the chain corresponds to 119-139 (DRCLIVHKPIWCQNHRNVRTA). A helical membrane pass occupies residues 140-160 (FAICGCVWVVAFVMCVPVFVY). Residues 161–333 (RDLFIMDNRS…TPLMAITITR (173 aa)) are Extracellular-facing. N168 is a glycosylation site (N-linked (GlcNAc...) asparagine). Y174 and Y184 each carry sulfotyrosine. N-linked (GlcNAc...) asparagine glycosylation is found at N197 and N201. Position 312 is a sulfotyrosine (Y312). The helical transmembrane segment at 334–353 (LVVGFLVPFFIMVICYSLIV) threads the bilayer. The Cytoplasmic portion of the chain corresponds to 354-370 (FRMRKTNFTKSRNKTFR). Residues 371–393 (VAVAVVTVFFICWTPYHLVGVLL) form a helical membrane-spanning segment. At 394–410 (LITDPESSLGEAVMSWD) the chain is on the extracellular side. A helical membrane pass occupies residues 411–431 (HMSIALASANSCFNPFLYALL). At 432–477 (GKDFRKKARQSIKGILEAAFSEELTHSTNCTQDKASSKRNNMSTDV) the chain is on the cytoplasmic side. S452 carries the phosphoserine modification. Residue T456 is modified to Phosphothreonine.

This sequence belongs to the G-protein coupled receptor 1 family. Interacts with VGF-derived peptide TLQP-21. As to expression, detected in varying levels in all tissues examined except the spleen. Especially abundant in heart and lung.

The protein resides in the cell membrane. Receptor for the chemotactic and inflammatory peptide anaphylatoxin C3a. This receptor stimulates chemotaxis, granule enzyme release and superoxide anion production. This chain is C3a anaphylatoxin chemotactic receptor (C3ar1), found in Mus musculus (Mouse).